We begin with the raw amino-acid sequence, 89 residues long: MSLDTAEKQKLIETHQVHPTDTGSAEVQVAMLSKRISKLSDHLQGNIHDFSSRQGLLKMIGKRKRLLSYIKDKNIQRYQELVKKIGIRG.

This sequence belongs to the universal ribosomal protein uS15 family. As to quaternary structure, part of the 30S ribosomal subunit. Forms a bridge to the 50S subunit in the 70S ribosome, contacting the 23S rRNA.

Functionally, one of the primary rRNA binding proteins, it binds directly to 16S rRNA where it helps nucleate assembly of the platform of the 30S subunit by binding and bridging several RNA helices of the 16S rRNA. Its function is as follows. Forms an intersubunit bridge (bridge B4) with the 23S rRNA of the 50S subunit in the ribosome. The chain is Small ribosomal subunit protein uS15 from Prochlorococcus marinus (strain MIT 9215).